The primary structure comprises 984 residues: Putative formate dehydrogenase SA2102 (984 aa).

The 77-residue stretch at 3–79 folds into the 2Fe-2S ferredoxin-type domain; the sequence is EHLVVTLDGK…PMTVNTVNND (77 aa). Residues Cys37, Cys48, Cys51, and Cys63 each contribute to the [2Fe-2S] cluster site. Residues 79–119 enclose the 4Fe-4S His(Cys)3-ligated-type domain; sequence DVKDAQKEALDRILEKHMLYCTVCDYNNGDCEIHNTMDAWG. Positions 95, 99, 102, 109, 147, 150, 153, 157, 190, 193, 196, 200, 264, 267, 271, and 299 each coordinate [4Fe-4S] cluster. 4Fe-4S ferredoxin-type domains follow at residues 138–165 and 181–211; these read PFYRYDPNQCILCGRCVEACQDIEVNET and NDVPINESSCVSCGQCATVCPCNAMMEVNME. Residues 252-984 form a formate dehydrogenase region; that stretch reads MRKERIKKTK…YVFPGNQVDK (733 aa). Residues 257–313 enclose the 4Fe-4S Mo/W bis-MGD-type domain; sequence IKKTKTVCTYCGVGCSFEVWTKDREILKVQPSHDSPANKIATCVKGKFSWGHINSDQ.

It in the C-terminal section; belongs to the prokaryotic molybdopterin-containing oxidoreductase family. [2Fe-2S] cluster is required as a cofactor. Requires [4Fe-4S] cluster as cofactor. The cofactor is Mo-bis(molybdopterin guanine dinucleotide).

The enzyme catalyses formate + NAD(+) = CO2 + NADH. This chain is Putative formate dehydrogenase SA2102, found in Staphylococcus aureus (strain N315).